Consider the following 186-residue polypeptide: UPF0340 protein SZO_02480 (186 aa).

The protein belongs to the UPF0340 family.

The protein is UPF0340 protein SZO_02480 of Streptococcus equi subsp. zooepidemicus (strain H70).